The chain runs to 151 residues: MYYSIIIACLVLLLCLVIYVGHRADHALKYLEGMWHGDPVFLKQSGLQSFYLYIQPGHTCFFSIVNKNGEKLMETKIPCTITNKIYMFFKPIFEFHVVMAHTYSYFPKQFNFLLDSTEGKLILENNHVIYAVLYKDNFATALGKTVKKYIT.

Positions 1 to 24 (MYYSIIIACLVLLLCLVIYVGHRA) are cleaved as a signal peptide.

The protein belongs to the asfivirus EP152R family.

Its subcellular location is the virion. This is an uncharacterized protein from Ornithodoros (relapsing fever ticks).